Reading from the N-terminus, the 572-residue chain is Methionine--tRNA ligase (572 aa).

The 'HIGH' region motif lies at 11-21 (PYINGIKHLGN). Residues Cys-143, Cys-146, Cys-156, and Cys-159 each contribute to the Zn(2+) site. The short motif at 346–350 (QFSTS) is the 'KMSKS' region element. Residue Thr-349 coordinates ATP.

Belongs to the class-I aminoacyl-tRNA synthetase family. MetG type 1 subfamily. In terms of assembly, monomer. Requires Zn(2+) as cofactor.

The protein localises to the cytoplasm. The catalysed reaction is tRNA(Met) + L-methionine + ATP = L-methionyl-tRNA(Met) + AMP + diphosphate. In terms of biological role, is required not only for elongation of protein synthesis but also for the initiation of all mRNA translation through initiator tRNA(fMet) aminoacylation. The chain is Methionine--tRNA ligase from Cereibacter sphaeroides (strain KD131 / KCTC 12085) (Rhodobacter sphaeroides).